We begin with the raw amino-acid sequence, 147 residues long: uncharacterized protein (147 aa).

The HTH marR-type domain maps to 1–137; the sequence is MRDNTIGSLI…LYELMTKVHK (137 aa). A DNA-binding region (H-T-H motif) is located at residues 53–76; the sequence is QMELAEKVTVTQGGISRMLTRLEK.

This is an uncharacterized protein from Bacillus thuringiensis subsp. konkukian (strain 97-27).